Reading from the N-terminus, the 97-residue chain is U6-theraphotoxin-Hhn1a 2 (97 aa).

An N-terminal signal peptide occupies residues 1 to 33 (MLIKQFSRRPKNMKVQILLAFAALFVLAVGSYA). Residues 34–61 (SESKKLDLRDASFSAMFSADYQLNPQER) constitute a propeptide that is removed on maturation. Intrachain disulfides connect cysteine 63–cysteine 77, cysteine 70–cysteine 82, and cysteine 76–cysteine 89.

Belongs to the neurotoxin 10 (Hwtx-1) family. 12 (Hntx-12) subfamily. As to expression, expressed by the venom gland.

It is found in the secreted. Ion channel inhibitor. The chain is U6-theraphotoxin-Hhn1a 2 from Cyriopagopus hainanus (Chinese bird spider).